Consider the following 216-residue polypeptide: MSKVSRDTLYEAVREVQAGSISKRRKFLETVELQISLKNYDPQKDKRFSGTVRLKTTPRPKFSVCVLGDQQHCDEAKAAEIPHMDIEALKKLNKNKKMVKKLAKKYDAFLASESLIKQIPRILGPGLNKAGKFPSLLTHNENLNTKVDEVKSTIKFQMKKVLCLAVAVGHVRMSEDELVYNIHLAVNFLVSLLKKNWQNVRALYIKSSMGKPQRLY.

This sequence belongs to the universal ribosomal protein uL1 family. Component of the large ribosomal subunit.

It localises to the cytoplasm. In terms of biological role, component of the large ribosomal subunit. The ribosome is a large ribonucleoprotein complex responsible for the synthesis of proteins in the cell. In Ictalurus punctatus (Channel catfish), this protein is Large ribosomal subunit protein uL1 (rpl10a).